A 372-amino-acid polypeptide reads, in one-letter code: MVATPLPPTQSPRHPSLQELSLSELQTWLDELAERIITGETLDRATAIALTEIEGEEKILALCAAADRVRQACCGNTVDLCSIVNIKSGNCSENCSFCAQSAHHPGQDSPIYGMKTPEDILAQARAAAAAGAKRFCLVSQGRGPKYNSPKSTEFEQILATVRAIIAETNIKPCCALGEVTPEQAQALKEAGVSRYNHNLESSENFFPEVATTHSWRDRVETIKTLKAAGIQACTGGILGLGESWQDRVDLALALRELEVESVPLNLLNPRAGTLLGEQSKLDPFTALKAIAIFRLILPQQIIRYAGGREAVMGELQALGLKAGINAMLVGHYLTTMGQPPEQDHAMLAGLGLQGGEAPIPGEYVRASQVREL.

Positions Cys-73–Arg-308 constitute a Radical SAM core domain. 3 residues coordinate [4Fe-4S] cluster: Cys-91, Cys-95, and Cys-98. 4 residues coordinate [2Fe-2S] cluster: Cys-136, Cys-173, Cys-233, and Arg-303.

It belongs to the radical SAM superfamily. Biotin synthase family. As to quaternary structure, homodimer. It depends on [4Fe-4S] cluster as a cofactor. [2Fe-2S] cluster serves as cofactor.

The catalysed reaction is (4R,5S)-dethiobiotin + (sulfur carrier)-SH + 2 reduced [2Fe-2S]-[ferredoxin] + 2 S-adenosyl-L-methionine = (sulfur carrier)-H + biotin + 2 5'-deoxyadenosine + 2 L-methionine + 2 oxidized [2Fe-2S]-[ferredoxin]. It participates in cofactor biosynthesis; biotin biosynthesis; biotin from 7,8-diaminononanoate: step 2/2. Functionally, catalyzes the conversion of dethiobiotin (DTB) to biotin by the insertion of a sulfur atom into dethiobiotin via a radical-based mechanism. The polypeptide is Biotin synthase (Cyanothece sp. (strain PCC 7425 / ATCC 29141)).